The primary structure comprises 149 residues: Calmodulin (149 aa).

Alanine 2 carries the N-acetylalanine modification. EF-hand domains are found at residues 8 to 43 (EQISEFKEAFSLFDKDGDGTITTKELGTVMRSLGQN), 44 to 79 (PTEAELQDMINEIDTDGNGTIDFPEFLTLMARKLKD), 81 to 116 (DTEEELIEAFRVFDRDGDGYISADELRHVMTNLGEK), and 117 to 149 (LTNEEVDEMIREADIDGDGQINYEEFVKMMIAK). Ca(2+) contacts are provided by aspartate 21, aspartate 23, aspartate 25, threonine 27, glutamate 32, aspartate 57, aspartate 59, asparagine 61, threonine 63, glutamate 68, aspartate 94, aspartate 96, aspartate 98, tyrosine 100, glutamate 105, aspartate 130, aspartate 132, aspartate 134, glutamine 136, and glutamate 141.

Belongs to the calmodulin family.

The protein localises to the cytoplasm. Its function is as follows. Calmodulin mediates the control of a large number of enzymes, ion channels and other proteins by Ca(2+). Among the enzymes to be stimulated by the calmodulin-Ca(2+) complex are a number of protein kinases and phosphatases. The sequence is that of Calmodulin from Plasmodium falciparum (isolate 3D7).